The sequence spans 85 residues: Large ribosomal subunit protein bL31B (85 aa).

Belongs to the bacterial ribosomal protein bL31 family. Type B subfamily. Part of the 50S ribosomal subunit.

In Pseudomonas entomophila (strain L48), this protein is Large ribosomal subunit protein bL31B.